Consider the following 454-residue polypeptide: tRNA modification GTPase MnmE (454 aa).

Arg-23, Glu-80, and Lys-120 together coordinate (6S)-5-formyl-5,6,7,8-tetrahydrofolate. The TrmE-type G domain maps to 216 to 377; that stretch reads GMKVVIAGRP…LRNHLKQSMG (162 aa). Asn-226 provides a ligand contact to K(+). Residues 226-231, 245-251, 270-273, 335-338, and 358-360 each bind GTP; these read NAGKSS, TDIAGTT, DTAG, NKAD, and SAR. Ser-230 lines the Mg(2+) pocket. 3 residues coordinate K(+): Thr-245, Ile-247, and Thr-250. Thr-251 serves as a coordination point for Mg(2+). (6S)-5-formyl-5,6,7,8-tetrahydrofolate is bound at residue Lys-454.

Belongs to the TRAFAC class TrmE-Era-EngA-EngB-Septin-like GTPase superfamily. TrmE GTPase family. As to quaternary structure, homodimer. Heterotetramer of two MnmE and two MnmG subunits. It depends on K(+) as a cofactor.

It localises to the cytoplasm. Its function is as follows. Exhibits a very high intrinsic GTPase hydrolysis rate. Involved in the addition of a carboxymethylaminomethyl (cmnm) group at the wobble position (U34) of certain tRNAs, forming tRNA-cmnm(5)s(2)U34. The chain is tRNA modification GTPase MnmE from Salmonella paratyphi C (strain RKS4594).